The chain runs to 90 residues: U7-theraphotoxin-Hhn1b (90 aa).

A signal peptide spans 1–19 (MKTAIFTVVLALAVFAVLS). Residues 20–50 (FGWEANEKALSEEFTELIHEKEAASETEARE) constitute a propeptide that is removed on maturation. Disulfide bonds link Cys-51–Cys-65, Cys-58–Cys-70, and Cys-64–Cys-81.

It belongs to the neurotoxin 10 (Hwtx-1) family. 13 (Hntx-13) subfamily. Expressed by the venom gland.

It localises to the secreted. Ion channel inhibitor. In Cyriopagopus hainanus (Chinese bird spider), this protein is U7-theraphotoxin-Hhn1b.